A 126-amino-acid chain; its full sequence is uncharacterized protein (126 aa).

Over 1–28 (MAGEAVSEHTPDSQEVTVTSVVCCLDSV) the chain is Cytoplasmic. Residues 29 to 49 (VEIGHHVVYSVVTPLIVAVLI) form a helical membrane-spanning segment. Residues 50–75 (DTMAGEAVLEHTSDSQEEIVTTVVCS) lie on the Extracellular side of the membrane. The helical transmembrane segment at 76 to 96 (VVPLVCFVVSVVCFVISVVEI) threads the bilayer. Glycine 97 is a topological domain (cytoplasmic). A helical transmembrane segment spans residues 98 to 118 (HHVVYSVVAPLTVTVAVETIA). Residues 119 to 126 (EEMDSVHT) are Extracellular-facing.

It is found in the membrane. This is an uncharacterized protein from Saccharomyces cerevisiae (strain ATCC 204508 / S288c) (Baker's yeast).